Reading from the N-terminus, the 331-residue chain is MNYLQLPKIDLHCHLDGSVRPQTVIDLAKLQDVTIPSFNVDDIKALMVAPASCPNLDEYLTRFALPVSVMQTEAALERISFELFEDAAKENVKYLEVRFGPQLHQKMSLNFEQIIGSVVKGMRRAEAQYDIKGNYILSIIKVLPKDDINDVIDAGAKFLNNGVVAFDLAASEEPGFCHEYIPYAKYALEKGYRITIHAGEQGVGQNVYDAISLLGAERIGHGIHINSHQQAYELVKTEAVALETCPSSNVQTKAVESIESHPFGDFYRDGLLVTINTDNRTVSDTTMTKELQLAAEKFNLTEADYFAIYKMSVDNAFTSDEVKLSLLKFID.

Zn(2+)-binding residues include His12 and His14. Residues His14 and Asp16 each contribute to the substrate site. His197 contacts Zn(2+). Glu200 serves as the catalytic Proton donor. Asp278 contributes to the Zn(2+) binding site.

It belongs to the metallo-dependent hydrolases superfamily. Adenosine and AMP deaminases family. Adenosine deaminase subfamily. The cofactor is Zn(2+).

The enzyme catalyses adenosine + H2O + H(+) = inosine + NH4(+). The catalysed reaction is 2'-deoxyadenosine + H2O + H(+) = 2'-deoxyinosine + NH4(+). Catalyzes the hydrolytic deamination of adenosine and 2-deoxyadenosine. This chain is Adenosine deaminase, found in Shewanella pealeana (strain ATCC 700345 / ANG-SQ1).